Reading from the N-terminus, the 466-residue chain is 3-isopropylmalate dehydratase large subunit (466 aa).

3 residues coordinate [4Fe-4S] cluster: Cys-347, Cys-407, and Cys-410.

Belongs to the aconitase/IPM isomerase family. LeuC type 1 subfamily. As to quaternary structure, heterodimer of LeuC and LeuD. [4Fe-4S] cluster is required as a cofactor.

The enzyme catalyses (2R,3S)-3-isopropylmalate = (2S)-2-isopropylmalate. Its pathway is amino-acid biosynthesis; L-leucine biosynthesis; L-leucine from 3-methyl-2-oxobutanoate: step 2/4. Catalyzes the isomerization between 2-isopropylmalate and 3-isopropylmalate, via the formation of 2-isopropylmaleate. This is 3-isopropylmalate dehydratase large subunit from Pectobacterium carotovorum subsp. carotovorum (strain PC1).